Reading from the N-terminus, the 262-residue chain is uncharacterized protein (262 aa).

One can recognise an ABC transporter domain in the interval 5–223 (IKVENLTKYF…MAYIEYLDNG (219 aa)). 37–44 (GHNGAGKT) lines the ATP pocket.

Belongs to the ABC transporter superfamily.

This is an uncharacterized protein from Methanocaldococcus jannaschii (strain ATCC 43067 / DSM 2661 / JAL-1 / JCM 10045 / NBRC 100440) (Methanococcus jannaschii).